The primary structure comprises 278 residues: Formamidopyrimidine-DNA glycosylase (278 aa).

The active-site Schiff-base intermediate with DNA is the Pro2. Glu3 acts as the Proton donor in catalysis. The active-site Proton donor; for beta-elimination activity is the Lys59. DNA contacts are provided by His94, Arg113, and Lys154. An FPG-type zinc finger spans residues 239–273 (KVHTKKGEFCIKCSSKIEKIKFKGRGTYFCPTCQK). Arg263 functions as the Proton donor; for delta-elimination activity in the catalytic mechanism.

The protein belongs to the FPG family. As to quaternary structure, monomer. Requires Zn(2+) as cofactor.

It carries out the reaction Hydrolysis of DNA containing ring-opened 7-methylguanine residues, releasing 2,6-diamino-4-hydroxy-5-(N-methyl)formamidopyrimidine.. It catalyses the reaction 2'-deoxyribonucleotide-(2'-deoxyribose 5'-phosphate)-2'-deoxyribonucleotide-DNA = a 3'-end 2'-deoxyribonucleotide-(2,3-dehydro-2,3-deoxyribose 5'-phosphate)-DNA + a 5'-end 5'-phospho-2'-deoxyribonucleoside-DNA + H(+). Involved in base excision repair of DNA damaged by oxidation or by mutagenic agents. Acts as a DNA glycosylase that recognizes and removes damaged bases. Has a preference for oxidized purines, such as 7,8-dihydro-8-oxoguanine (8-oxoG). Has AP (apurinic/apyrimidinic) lyase activity and introduces nicks in the DNA strand. Cleaves the DNA backbone by beta-delta elimination to generate a single-strand break at the site of the removed base with both 3'- and 5'-phosphates. This is Formamidopyrimidine-DNA glycosylase (mutM) from Mycoplasmopsis pulmonis (strain UAB CTIP) (Mycoplasma pulmonis).